We begin with the raw amino-acid sequence, 246 residues long: NH(3)-dependent NAD(+) synthetase (246 aa).

Residue 29 to 36 (GLSGGIDS) participates in ATP binding. Asp35 is a binding site for Mg(2+). Arg110 provides a ligand contact to deamido-NAD(+). Thr130 contacts ATP. A Mg(2+)-binding site is contributed by Glu135. Positions 159 and 181 each coordinate ATP.

The protein belongs to the NAD synthetase family. As to quaternary structure, homodimer.

It carries out the reaction deamido-NAD(+) + NH4(+) + ATP = AMP + diphosphate + NAD(+) + H(+). Its pathway is cofactor biosynthesis; NAD(+) biosynthesis; NAD(+) from deamido-NAD(+) (ammonia route): step 1/1. Catalyzes the ATP-dependent amidation of deamido-NAD to form NAD. Uses ammonia as a nitrogen source. The chain is NH(3)-dependent NAD(+) synthetase from Campylobacter jejuni subsp. jejuni serotype O:2 (strain ATCC 700819 / NCTC 11168).